A 226-amino-acid polypeptide reads, in one-letter code: uncharacterized protein (226 aa).

This is an uncharacterized protein from Methanocaldococcus jannaschii (strain ATCC 43067 / DSM 2661 / JAL-1 / JCM 10045 / NBRC 100440) (Methanococcus jannaschii).